We begin with the raw amino-acid sequence, 44 residues long: Thymosin beta (44 aa).

The segment covering 1-17 (MSDKPDVKEVESFDKTT) has biased composition (basic and acidic residues). Positions 1 to 44 (MSDKPDVKEVESFDKTTLKKTTTNEKNTLPTKEVIEQEKSGGSD) are disordered. The segment covering 19 to 32 (KKTTTNEKNTLPTK) has biased composition (low complexity). Positions 33–44 (EVIEQEKSGGSD) are enriched in basic and acidic residues.

This sequence belongs to the thymosin beta family.

The protein localises to the cytoplasm. It localises to the cytoskeleton. In terms of biological role, plays an important role in the organization of the cytoskeleton. Binds to and sequesters actin monomers (G actin) and therefore inhibits actin polymerization. This chain is Thymosin beta, found in Gillichthys mirabilis (Long-jawed mudsucker).